A 218-amino-acid chain; its full sequence is Pyridoxal phosphate homeostasis protein (218 aa).

The residue at position 25 (Lys-25) is an N6-(pyridoxal phosphate)lysine.

This sequence belongs to the pyridoxal phosphate-binding protein YggS/PROSC family.

In terms of biological role, pyridoxal 5'-phosphate (PLP)-binding protein, which is involved in PLP homeostasis. The polypeptide is Pyridoxal phosphate homeostasis protein (Synechocystis sp. (strain ATCC 27184 / PCC 6803 / Kazusa)).